The following is a 781-amino-acid chain: Potassium transporter 5 (781 aa).

Positions 1–11 (MTEPLHTSSNG) are enriched in polar residues. The tract at residues 1 to 24 (MTEPLHTSSNGGAERGPNAAFESE) is disordered. Over 1 to 63 (MTEPLHTSSN…AKVGWATTLH (63 aa)) the chain is Cytoplasmic. Residues 64-84 (LAFQSIGVVYGDMGTSPLYVF) traverse the membrane as a helical segment. Topologically, residues 85-100 (SSTFTNGIKDTNDILG) are extracellular. The chain crosses the membrane as a helical span at residues 101-121 (VMSLIIYTVVLLPLIKYCFIV). Residues 122–187 (LRANDNGDGG…EKMENSPNFK (66 aa)) are Cytoplasmic-facing. A helical transmembrane segment spans residues 188–208 (IILFLVTILATSMVIGDGVLT). Topologically, residues 209–225 (PCISVLSAVGGIKESAK) are extracellular. The helical transmembrane segment at 226 to 246 (SLTQGQIAGIAIAILIVLFLV) threads the bilayer. Residues 247–257 (QRFGTDKVGYS) lie on the Cytoplasmic side of the membrane. The chain crosses the membrane as a helical span at residues 258–278 (FGPIILTWFIFIAGTGVYNLF). Residues 279–304 (KHDTGVLKAFNPKYIVDYFERNGKQG) lie on the Extracellular side of the membrane. A helical membrane pass occupies residues 305–325 (WISLGGVILCITGTEAMFADL). The Cytoplasmic portion of the chain corresponds to 326–334 (GHFNVRAIQ). Residues 335–355 (IGFSVVLLPSVLLAYIGQAAY) traverse the membrane as a helical segment. Residues 356–381 (LRIYPEHVADTFYKSIPDPLYWPTFV) lie on the Extracellular side of the membrane. Residues 382-402 (VAVAAAIIASQAMISGAFAII) traverse the membrane as a helical segment. Residues 403–426 (AQSQILGCFPRVRVIHTSTKFHGQ) are Cytoplasmic-facing. Residues 427–447 (VYIPEINYVLMVLCVAVTAIF) form a helical membrane-spanning segment. The Extracellular segment spans residues 448-458 (QTTDKIGNAYG). Residues 459-479 (IAVVFVMFITTLLVTLVMVMI) form a helical membrane-spanning segment. The Cytoplasmic portion of the chain corresponds to 480–481 (WK). The helical transmembrane segment at 482 to 502 (TSLLWIALFPVIFGGAELIYL) threads the bilayer. At 503-512 (SSAFYKFTQG) the chain is on the extracellular side. The helical transmembrane segment at 513-533 (GYLPLVFSAILMFIMATWHYV) threads the bilayer. The Cytoplasmic segment spans residues 534–781 (HVHRYKYELR…LLRVGMTYEI (248 aa)). Residues 681–707 (VTDPTSEVQDAMSSRNNSDQHTTEPRN) form a disordered region. Positions 683 to 700 (DPTSEVQDAMSSRNNSDQ) are enriched in polar residues.

This sequence belongs to the HAK/KUP transporter (TC 2.A.72.3) family. As to expression, expressed in root epidermis, parenchyma of stele tissue and primordial of the lateral root, root-shoot junctions and leaf sheaths. Expressed in germinated embryonic tissue, young tillers, flower organs and pedicels.

Its subcellular location is the cell membrane. The enzyme catalyses K(+)(in) = K(+)(out). Its function is as follows. High-affinity potassium transporter. Its potassium transporter activity does not seem to be affected by high sodium and low potassium concentrations in the extracellular environment. Invloved in salt stress tolerance by enhancing root potassium uptake and translocation to the shoot to prevent sodium influx during salt stress. Involved in the positive regulation of disease resistance against the rice grassy stunt virus by promoting potassium transport and increasing endogenous plant potassium. The polypeptide is Potassium transporter 5 (HAK5) (Oryza sativa subsp. japonica (Rice)).